We begin with the raw amino-acid sequence, 156 residues long: Ribosomal RNA large subunit methyltransferase H (156 aa).

Residues Leu73, Gly104, and 123 to 128 (LSPLTL) each bind S-adenosyl-L-methionine.

Belongs to the RNA methyltransferase RlmH family. Homodimer.

Its subcellular location is the cytoplasm. It carries out the reaction pseudouridine(1915) in 23S rRNA + S-adenosyl-L-methionine = N(3)-methylpseudouridine(1915) in 23S rRNA + S-adenosyl-L-homocysteine + H(+). Functionally, specifically methylates the pseudouridine at position 1915 (m3Psi1915) in 23S rRNA. The chain is Ribosomal RNA large subunit methyltransferase H from Aliivibrio fischeri (strain MJ11) (Vibrio fischeri).